The chain runs to 283 residues: Nucleoid occlusion protein (283 aa).

The H-T-H motif DNA-binding region spans 142-161 (ESLAQRLGKGQSTIANKLRL).

Belongs to the ParB family.

It is found in the cytoplasm. The protein resides in the nucleoid. Functionally, effects nucleoid occlusion by binding relatively nonspecifically to DNA and preventing the assembly of the division machinery in the vicinity of the nucleoid, especially under conditions that disturb the cell cycle. It helps to coordinate cell division and chromosome segregation by preventing the formation of the Z ring through the nucleoid, which would cause chromosome breakage. This Shouchella clausii (strain KSM-K16) (Alkalihalobacillus clausii) protein is Nucleoid occlusion protein.